A 138-amino-acid polypeptide reads, in one-letter code: Protein SPMIP3 (138 aa).

In Bos taurus (Bovine), this protein is Protein SPMIP3 (SPMIP3).